A 301-amino-acid polypeptide reads, in one-letter code: GTP cyclohydrolase FolE2 (301 aa).

The protein belongs to the GTP cyclohydrolase IV family.

It catalyses the reaction GTP + H2O = 7,8-dihydroneopterin 3'-triphosphate + formate + H(+). The protein operates within cofactor biosynthesis; 7,8-dihydroneopterin triphosphate biosynthesis; 7,8-dihydroneopterin triphosphate from GTP: step 1/1. Functionally, converts GTP to 7,8-dihydroneopterin triphosphate. The polypeptide is GTP cyclohydrolase FolE2 (Pseudomonas syringae pv. tomato (strain ATCC BAA-871 / DC3000)).